We begin with the raw amino-acid sequence, 346 residues long: Low specificity L-threonine aldolase (346 aa).

Lys207 is subject to N6-(pyridoxal phosphate)lysine.

The protein belongs to the threonine aldolase family. In terms of assembly, homotetramer. The cofactor is pyridoxal 5'-phosphate.

The enzyme catalyses L-threonine = acetaldehyde + glycine. It carries out the reaction L-allo-threonine = acetaldehyde + glycine. Catalyzes the cleavage of L-allo-threonine and L-threonine to glycine and acetaldehyde. Can also act on L-erythro-phenylserine, L-threo-phenylserine, L-beta-3,4-methylenedioxyphenylserine and L-beta-3,4-dihydroxyphenylserine. This Pseudomonas sp. (strain NCIMB 10558) protein is Low specificity L-threonine aldolase (ltaE).